The primary structure comprises 315 residues: Ankyrin repeat domain-containing protein EMB506, chloroplastic (315 aa).

A chloroplast-targeting transit peptide spans 1 to 39; sequence MVSSVLSIPPQTCLLPRLPISDSVNCKSKIVYCLSTSVR. Polar residues predominate over residues 44-65; it reads KRQSTARTRSFTETNRRTPSVQ. A disordered region spans residues 44-106; it reads KRQSTARTRS…DNESDWEDDS (63 aa). Residues 72–104 are compositionally biased toward acidic residues; sequence EDPDDGSDSENEYEGEEEDGIGNDLDNESDWED. ANK repeat units lie at residues 151-180, 184-213, 217-246, 250-279, and 283-307; these read KSWKPLQTLALSMQIQLMDNLIENGLDIDD, DNQTALHKAIIGKKEAVISHLLRKGANPHL, DGAAPIHYAVQVGALQTVKLLFKYNVDVNV, EGWTPLHIAVQSRNRDITKILLTNGADKTR, and DGKLALDLALCFGRDFKSYDLVKLL.

Interacts with AKR. No homodimerization observed. Expressed in roots, inflorescence stems, flowers, siliques, dry seeds and mature cauline leaves.

The protein localises to the plastid. It localises to the chloroplast. Functionally, involved in the initial differentiation of the proplastid during the embryo development. Also required for correct cotyledon, true leaf and cauline leaf margin development. This chain is Ankyrin repeat domain-containing protein EMB506, chloroplastic (EMB506), found in Arabidopsis thaliana (Mouse-ear cress).